The chain runs to 270 residues: 4-diphosphocytidyl-2-C-methyl-D-erythritol kinase (270 aa).

Residue lysine 8 is part of the active site. Position 90–100 (90–100 (PIGAGLGGGSS)) interacts with ATP. Residue aspartate 132 is part of the active site.

Belongs to the GHMP kinase family. IspE subfamily.

The catalysed reaction is 4-CDP-2-C-methyl-D-erythritol + ATP = 4-CDP-2-C-methyl-D-erythritol 2-phosphate + ADP + H(+). The protein operates within isoprenoid biosynthesis; isopentenyl diphosphate biosynthesis via DXP pathway; isopentenyl diphosphate from 1-deoxy-D-xylulose 5-phosphate: step 3/6. In terms of biological role, catalyzes the phosphorylation of the position 2 hydroxy group of 4-diphosphocytidyl-2C-methyl-D-erythritol. This is 4-diphosphocytidyl-2-C-methyl-D-erythritol kinase from Cytophaga hutchinsonii (strain ATCC 33406 / DSM 1761 / CIP 103989 / NBRC 15051 / NCIMB 9469 / D465).